A 324-amino-acid polypeptide reads, in one-letter code: Acetyl-coenzyme A carboxylase carboxyl transferase subunit alpha (324 aa).

The 255-residue stretch at 44 to 298 (QLEAKATQLR…KTAIVKSLDD (255 aa)) folds into the CoA carboxyltransferase C-terminal domain.

This sequence belongs to the AccA family. Acetyl-CoA carboxylase is a heterohexamer composed of biotin carboxyl carrier protein (AccB), biotin carboxylase (AccC) and two subunits each of ACCase subunit alpha (AccA) and ACCase subunit beta (AccD).

It is found in the cytoplasm. It carries out the reaction N(6)-carboxybiotinyl-L-lysyl-[protein] + acetyl-CoA = N(6)-biotinyl-L-lysyl-[protein] + malonyl-CoA. It functions in the pathway lipid metabolism; malonyl-CoA biosynthesis; malonyl-CoA from acetyl-CoA: step 1/1. Its function is as follows. Component of the acetyl coenzyme A carboxylase (ACC) complex. First, biotin carboxylase catalyzes the carboxylation of biotin on its carrier protein (BCCP) and then the CO(2) group is transferred by the carboxyltransferase to acetyl-CoA to form malonyl-CoA. In Trichodesmium erythraeum (strain IMS101), this protein is Acetyl-coenzyme A carboxylase carboxyl transferase subunit alpha.